Here is a 299-residue protein sequence, read N- to C-terminus: Phosphatidylserine decarboxylase proenzyme (299 aa).

Active-site charge relay system; for autoendoproteolytic cleavage activity residues include D90, H147, and S254. S254 functions as the Schiff-base intermediate with substrate; via pyruvic acid; for decarboxylase activity in the catalytic mechanism. S254 is subject to Pyruvic acid (Ser); by autocatalysis.

It belongs to the phosphatidylserine decarboxylase family. PSD-B subfamily. Prokaryotic type I sub-subfamily. As to quaternary structure, heterodimer of a large membrane-associated beta subunit and a small pyruvoyl-containing alpha subunit. It depends on pyruvate as a cofactor. In terms of processing, is synthesized initially as an inactive proenzyme. Formation of the active enzyme involves a self-maturation process in which the active site pyruvoyl group is generated from an internal serine residue via an autocatalytic post-translational modification. Two non-identical subunits are generated from the proenzyme in this reaction, and the pyruvate is formed at the N-terminus of the alpha chain, which is derived from the carboxyl end of the proenzyme. The autoendoproteolytic cleavage occurs by a canonical serine protease mechanism, in which the side chain hydroxyl group of the serine supplies its oxygen atom to form the C-terminus of the beta chain, while the remainder of the serine residue undergoes an oxidative deamination to produce ammonia and the pyruvoyl prosthetic group on the alpha chain. During this reaction, the Ser that is part of the protease active site of the proenzyme becomes the pyruvoyl prosthetic group, which constitutes an essential element of the active site of the mature decarboxylase.

Its subcellular location is the cell membrane. The catalysed reaction is a 1,2-diacyl-sn-glycero-3-phospho-L-serine + H(+) = a 1,2-diacyl-sn-glycero-3-phosphoethanolamine + CO2. It functions in the pathway phospholipid metabolism; phosphatidylethanolamine biosynthesis; phosphatidylethanolamine from CDP-diacylglycerol: step 2/2. In terms of biological role, catalyzes the formation of phosphatidylethanolamine (PtdEtn) from phosphatidylserine (PtdSer). In Erwinia tasmaniensis (strain DSM 17950 / CFBP 7177 / CIP 109463 / NCPPB 4357 / Et1/99), this protein is Phosphatidylserine decarboxylase proenzyme.